The following is a 132-amino-acid chain: ATP synthase epsilon chain (132 aa).

The protein belongs to the ATPase epsilon chain family. As to quaternary structure, F-type ATPases have 2 components, CF(1) - the catalytic core - and CF(0) - the membrane proton channel. CF(1) has five subunits: alpha(3), beta(3), gamma(1), delta(1), epsilon(1). CF(0) has three main subunits: a, b and c.

The protein localises to the cell inner membrane. Its function is as follows. Produces ATP from ADP in the presence of a proton gradient across the membrane. In Anaeromyxobacter sp. (strain Fw109-5), this protein is ATP synthase epsilon chain.